Here is a 168-residue protein sequence, read N- to C-terminus: Small ribosomal subunit protein uS5 (168 aa).

Residues 14 to 77 (FEERVVSINR…EAAKKNLITV (64 aa)) form the S5 DRBM domain.

Belongs to the universal ribosomal protein uS5 family. In terms of assembly, part of the 30S ribosomal subunit. Contacts proteins S4 and S8.

Its function is as follows. With S4 and S12 plays an important role in translational accuracy. Functionally, located at the back of the 30S subunit body where it stabilizes the conformation of the head with respect to the body. This chain is Small ribosomal subunit protein uS5, found in Lactococcus lactis subsp. cremoris (strain MG1363).